The sequence spans 190 residues: Signal peptidase I W (190 aa).

Residues 4–24 (ISNILYVIIFTLIIVLTLVVI) traverse the membrane as a helical segment. S45 is a catalytic residue. The helical transmembrane segment at 143-163 (PIGTAVLLIVPGVMLLVYAFV) threads the bilayer.

It belongs to the peptidase S26B family.

Its subcellular location is the cell membrane. It catalyses the reaction Cleavage of hydrophobic, N-terminal signal or leader sequences from secreted and periplasmic proteins.. Functionally, required for the cleavage of the signal sequence of TasA and TapA, which are involved in biofilm formation. The protein is Signal peptidase I W of Bacillus subtilis (strain 168).